The sequence spans 570 residues: Small ribosomal subunit protein bS1 (570 aa).

6 consecutive S1 motif domains span residues 52-116 (GAIL…LSRE), 134-199 (GSIV…VSRR), 220-288 (GERR…LGLK), 305-375 (GKRV…LGLK), 392-462 (GLRV…LGVK), and 479-548 (GSDI…LSIK).

Belongs to the bacterial ribosomal protein bS1 family.

Functionally, binds mRNA; thus facilitating recognition of the initiation point. It is needed to translate mRNA with a short Shine-Dalgarno (SD) purine-rich sequence. This Chlamydia muridarum (strain MoPn / Nigg) protein is Small ribosomal subunit protein bS1 (rpsA).